The following is a 507-amino-acid chain: Alkyl hydroperoxide reductase subunit F (507 aa).

207–222 lines the FAD pocket; the sequence is DVLIVGGGPASGSAAI. Cys-335 and Cys-338 form a disulfide bridge. 347 to 361 lines the NAD(+) pocket; it reads DVAVIGGGNSGVEAA. Position 467-477 (467-477) interacts with FAD; it reads TNVPGIFAAGD.

It belongs to the class-II pyridine nucleotide-disulfide oxidoreductase family. As to quaternary structure, homodimer. Requires FAD as cofactor.

Serves to protect the cell against DNA damage by alkyl hydroperoxides. It can use either NADH or NADPH as electron donor for direct reduction of redox dyes or of alkyl hydroperoxides when combined with the AhpC protein. This is Alkyl hydroperoxide reductase subunit F (ahpF) from Staphylococcus epidermidis (strain ATCC 12228 / FDA PCI 1200).